A 343-amino-acid chain; its full sequence is Aldehyde reductase 2 (343 aa).

Tyrosine 177 lines the NADP(+) pocket.

Belongs to the NAD(P)-dependent epimerase/dehydratase family. Dihydroflavonol-4-reductase subfamily. In terms of assembly, monomer.

The enzyme catalyses a primary alcohol + NADP(+) = an aldehyde + NADPH + H(+). Its activity is regulated as follows. Inhibited by quercetin and diphenylhydantoin. Catalyzes the asymmetric reduction of o-substituted aliphatic and aromatic aldehydes and ketones to an S-enantiomer. Reduces ethyl 4-chloro-3-oxobutanoate to ethyl (S)-4-chloro-3-hydroxybutanoate. The protein is Aldehyde reductase 2 of Sporidiobolus salmonicolor (Yeast-like fungus).